The sequence spans 86 residues: Venom metalloproteinase (86 aa).

Position 7 (D7) interacts with Ca(2+). H67 is a Zn(2+) binding site. E68 is a catalytic residue. Positions 71 and 77 each coordinate Zn(2+).

This sequence belongs to the venom metalloproteinase (M12B) family. The cofactor is Zn(2+). In terms of tissue distribution, expressed by the venom gland.

It is found in the secreted. The protein is Venom metalloproteinase of Tityus serrulatus (Brazilian scorpion).